A 246-amino-acid polypeptide reads, in one-letter code: Auxin-responsive protein IAA25 (246 aa).

Residues 1 to 22 (MKSSSVAPRLKQERQDDCKFQE) form a disordered region. The segment covering 10–22 (LKQERQDDCKFQE) has biased composition (basic and acidic residues). The EAR-like (transcriptional repression) motif lies at 28-32 (LELRL). The PB1 domain occupies 143 to 238 (TMFVKVNLEG…SVKRLYIAQD (96 aa)).

This sequence belongs to the Aux/IAA family. In terms of assembly, homodimers and heterodimers. In terms of tissue distribution, highly expressed in flowers. Expressed in roots and seedlings.

Its subcellular location is the nucleus. Its function is as follows. Aux/IAA proteins are short-lived transcriptional factors that function as repressors of early auxin response genes at low auxin concentrations. The chain is Auxin-responsive protein IAA25 (IAA25) from Oryza sativa subsp. japonica (Rice).